The sequence spans 387 residues: Cystathionine gamma-lyase (387 aa).

Substrate is bound by residues Arg53, Tyr105, and Arg110. An N6-(pyridoxal phosphate)lysine modification is found at Lys202. Glu329 contacts substrate.

This sequence belongs to the trans-sulfuration enzymes family. Homotetramer. Interacts with CALM in a calcium-dependent manner. Pyridoxal 5'-phosphate is required as a cofactor.

The protein localises to the cytoplasm. The catalysed reaction is L,L-cystathionine + H2O = 2-oxobutanoate + L-cysteine + NH4(+). The enzyme catalyses L-cysteine + H2O = hydrogen sulfide + pyruvate + NH4(+) + H(+). It catalyses the reaction L-homocysteine + H2O = 2-oxobutanoate + hydrogen sulfide + NH4(+) + H(+). It carries out the reaction L-homoserine = 2-oxobutanoate + NH4(+). The protein operates within amino-acid biosynthesis; L-cysteine biosynthesis; L-cysteine from L-homocysteine and L-serine: step 2/2. Catalyzes the last step in the trans-sulfuration pathway from L-methionine to L-cysteine in a pyridoxal-5'-phosphate (PLP)-dependent manner, which consists on cleaving the L,L-cystathionine molecule into L-cysteine, ammonia and 2-oxobutanoate. Part of the L-cysteine derived from the trans-sulfuration pathway is utilized for biosynthesis of the ubiquitous antioxidant glutathione. Besides its role in the conversion of L-cystathionine into L-cysteine, it utilizes L-cysteine and L-homocysteine as substrates (at much lower rates than L,L-cystathionine) to produce the endogenous gaseous signaling molecule hydrogen sulfide (H2S). The sequence is that of Cystathionine gamma-lyase (cysA) from Dictyostelium discoideum (Social amoeba).